Reading from the N-terminus, the 616-residue chain is Replication protein A 70 kDa DNA-binding subunit (616 aa).

N-acetylmethionine is present on Met-1. Glycyl lysine isopeptide (Lys-Gly) (interchain with G-Cter in ubiquitin) cross-links involve residues Lys-22 and Lys-88. A disordered region spans residues 121–155 (GLGQPQVAPPAPAASPAASSRPQPQNGTSGAGSTV). A compositionally biased stretch (low complexity) spans 134-145 (ASPAASSRPQPQ). The segment covering 146–155 (NGTSGAGSTV) has biased composition (polar residues). An N6-acetyllysine; alternate mark is found at Lys-163 and Lys-167. Residues Lys-163 and Lys-167 each participate in a glycyl lysine isopeptide (Lys-Gly) (interchain with G-Cter in ubiquitin); alternate cross-link. Thr-180 bears the Phosphothreonine mark. A Glycyl lysine isopeptide (Lys-Gly) (interchain with G-Cter in ubiquitin) cross-link involves residue Lys-183. Position 191 is a phosphothreonine (Thr-191). Positions 197 to 281 (WTICARVTNK…VKNDYEMTFN (85 aa)) form a DNA-binding region, OB. Residues Lys-220 and Lys-244 each participate in a glycyl lysine isopeptide (Lys-Gly) (interchain with G-Cter in ubiquitin) cross-link. Lys-259 is subject to N6-acetyllysine; alternate. A Glycyl lysine isopeptide (Lys-Gly) (interchain with G-Cter in ubiquitin); alternate cross-link involves residue Lys-259. Glycyl lysine isopeptide (Lys-Gly) (interchain with G-Cter in ubiquitin) cross-links involve residues Lys-267 and Lys-331. Ser-384 is modified (phosphoserine). Glycyl lysine isopeptide (Lys-Gly) (interchain with G-Cter in ubiquitin) cross-links involve residues Lys-410 and Lys-431. Lys-449 participates in a covalent cross-link: Glycyl lysine isopeptide (Lys-Gly) (interchain with G-Cter in SUMO). Lys-458 is covalently cross-linked (Glycyl lysine isopeptide (Lys-Gly) (interchain with G-Cter in ubiquitin)). The segment at 481 to 503 (CPTQDCNKKVIDQQNGLYRCEKC) adopts a C4-type zinc-finger fold. Lys-553 is covalently cross-linked (Glycyl lysine isopeptide (Lys-Gly) (interchain with G-Cter in ubiquitin)). Residue Lys-577 forms a Glycyl lysine isopeptide (Lys-Gly) (interchain with G-Cter in SUMO) linkage.

This sequence belongs to the replication factor A protein 1 family. As to quaternary structure, component of the canonical replication protein A complex (RPA), a heterotrimer composed of RPA1, RPA2 and RPA3. The DNA-binding activity may reside exclusively on the RPA1 subunit. Interacts with PRPF19; the PRP19-CDC5L complex is recruited to the sites of DNA repair where it ubiquitinates the replication protein A complex (RPA). Interacts with RIPK1. Interacts with the polymerase alpha subunit POLA1/p180; this interaction stabilizes the replicative complex and reduces the misincorporation rate of DNA polymerase alpha by acting as a fidelity clamp. Interacts with RAD51 and SENP6 to regulate DNA repair. Interacts with HELB; this interaction promotes HELB recruitment to chromatin following DNA damage. Interacts with PRIMPOL; leading to recruit PRIMPOL on chromatin and stimulate its DNA primase activity. Interacts with XPA; the interaction is direct and associates XPA with the RPA complex. Interacts with ETAA1; the interaction is direct and promotes ETAA1 recruitment at stalled replication forks. Interacts with RPA1; this interaction associates HROB with the RPA complex. Interacts (when poly-ADP-ribosylated) with HTATSF1. DNA damage-induced 'Lys-63'-linked polyubiquitination by PRPF19 mediates ATRIP recruitment to the RPA complex at sites of DNA damage and activation of ATR. Ubiquitinated by RFWD3 at stalled replication forks in response to DNA damage: ubiquitination by RFWD3 does not lead to degradation by the proteasome and promotes removal of the RPA complex from stalled replication forks, promoting homologous recombination. In terms of processing, sumoylated on lysine residues Lys-449 and Lys-577, with Lys-449 being the major site. Sumoylation promotes recruitment of RAD51 to the DNA damage foci to initiate DNA repair through homologous recombination. Desumoylated by SENP6. Post-translationally, poly-ADP-ribosylated by PARP1; promoting recruitment of HTATSF1.

The protein localises to the nucleus. The protein resides in the PML body. Its function is as follows. As part of the heterotrimeric replication protein A complex (RPA/RP-A), binds and stabilizes single-stranded DNA intermediates, that form during DNA replication or upon DNA stress. It prevents their reannealing and in parallel, recruits and activates different proteins and complexes involved in DNA metabolism. Thereby, it plays an essential role both in DNA replication and the cellular response to DNA damage. In the cellular response to DNA damage, the RPA complex controls DNA repair and DNA damage checkpoint activation. Through recruitment of ATRIP activates the ATR kinase a master regulator of the DNA damage response. It is required for the recruitment of the DNA double-strand break repair factors RAD51 and RAD52 to chromatin in response to DNA damage. Also recruits to sites of DNA damage proteins like XPA and XPG that are involved in nucleotide excision repair and is required for this mechanism of DNA repair. Also plays a role in base excision repair (BER) probably through interaction with UNG. Also recruits SMARCAL1/HARP, which is involved in replication fork restart, to sites of DNA damage. May also play a role in telomere maintenance. The sequence is that of Replication protein A 70 kDa DNA-binding subunit (RPA1) from Pongo abelii (Sumatran orangutan).